Reading from the N-terminus, the 514-residue chain is 2-isopropylmalate synthase (514 aa).

The region spanning 5 to 268 is the Pyruvate carboxyltransferase domain; that stretch reads LIIFDTTLRD…DVGLDTTQIV (264 aa). Asp14, His202, His204, and Asn239 together coordinate Mn(2+). Residues 395-514 form a regulatory domain region; that stretch reads KFVSLSQRSE…KDDKLNPQRS (120 aa).

Belongs to the alpha-IPM synthase/homocitrate synthase family. LeuA type 1 subfamily. Homodimer. Requires Mn(2+) as cofactor.

It is found in the cytoplasm. The enzyme catalyses 3-methyl-2-oxobutanoate + acetyl-CoA + H2O = (2S)-2-isopropylmalate + CoA + H(+). Its pathway is amino-acid biosynthesis; L-leucine biosynthesis; L-leucine from 3-methyl-2-oxobutanoate: step 1/4. In terms of biological role, catalyzes the condensation of the acetyl group of acetyl-CoA with 3-methyl-2-oxobutanoate (2-ketoisovalerate) to form 3-carboxy-3-hydroxy-4-methylpentanoate (2-isopropylmalate). This Burkholderia ambifaria (strain MC40-6) protein is 2-isopropylmalate synthase.